The primary structure comprises 160 residues: Keratin-associated protein 13-4 (160 aa).

A run of 4 repeats spans residues 41–50, 51–60, 61–70, and 77–86. The tract at residues 41–86 is 4 X 10 AA approximate repeats; sequence CQLGSSLYRDCQKTCWEPASCQKSCYHPRTSMLCCPCQTTCSGSLG.

The protein belongs to the PMG family. In terms of assembly, interacts with hair keratins.

In terms of biological role, in the hair cortex, hair keratin intermediate filaments are embedded in an interfilamentous matrix, consisting of hair keratin-associated proteins (KRTAP), which are essential for the formation of a rigid and resistant hair shaft through their extensive disulfide bond cross-linking with abundant cysteine residues of hair keratins. The matrix proteins include the high-sulfur and high-glycine-tyrosine keratins. In Hylobates agilis (Agile gibbon), this protein is Keratin-associated protein 13-4 (KRTAP13-4).